The following is a 215-amino-acid chain: Adenylate kinase (215 aa).

Residue 10–15 (GAGKGT) participates in ATP binding. The tract at residues 30–59 (STGDMFRKAIKEETELGKEAKSYMDRGELV) is NMP. Residues Thr31, Arg36, 57 to 59 (ELV), 85 to 88 (GFPR), and Gln92 contribute to the AMP site. Residues 126-163 (GRRICESCGTTYHLVFNPPKVEGICDIDGGKLYQREDD) form an LID region. Arg127 provides a ligand contact to ATP. Cys130 and Cys133 together coordinate Zn(2+). 136-137 (TY) lines the ATP pocket. Cys150 and Asp153 together coordinate Zn(2+). Residues Arg160 and Arg171 each coordinate AMP. Lys199 lines the ATP pocket.

This sequence belongs to the adenylate kinase family. Monomer.

It localises to the cytoplasm. The enzyme catalyses AMP + ATP = 2 ADP. The protein operates within purine metabolism; AMP biosynthesis via salvage pathway; AMP from ADP: step 1/1. Its function is as follows. Catalyzes the reversible transfer of the terminal phosphate group between ATP and AMP. Plays an important role in cellular energy homeostasis and in adenine nucleotide metabolism. This is Adenylate kinase from Staphylococcus aureus (strain COL).